The primary structure comprises 166 residues: NAD(P)H-quinone oxidoreductase subunit I, chloroplastic (166 aa).

4Fe-4S ferredoxin-type domains follow at residues 55–84 and 95–124; these read GRIH…VDWK and LNYS…MTEE. [4Fe-4S] cluster-binding residues include C64, C67, C70, C74, C104, C107, C110, and C114.

The protein belongs to the complex I 23 kDa subunit family. NDH is composed of at least 16 different subunits, 5 of which are encoded in the nucleus. Requires [4Fe-4S] cluster as cofactor.

It localises to the plastid. The protein localises to the chloroplast thylakoid membrane. It carries out the reaction a plastoquinone + NADH + (n+1) H(+)(in) = a plastoquinol + NAD(+) + n H(+)(out). The catalysed reaction is a plastoquinone + NADPH + (n+1) H(+)(in) = a plastoquinol + NADP(+) + n H(+)(out). In terms of biological role, NDH shuttles electrons from NAD(P)H:plastoquinone, via FMN and iron-sulfur (Fe-S) centers, to quinones in the photosynthetic chain and possibly in a chloroplast respiratory chain. The immediate electron acceptor for the enzyme in this species is believed to be plastoquinone. Couples the redox reaction to proton translocation, and thus conserves the redox energy in a proton gradient. The chain is NAD(P)H-quinone oxidoreductase subunit I, chloroplastic from Laphamia lindheimeri (Lindheimer's rockdaisy).